The sequence spans 25 residues: Small ribosomal subunit protein eS32A (25 aa).

The segment at 1-25 is disordered; it reads MRDKWRKKRVRRLKRKRRKMRARSK.

The protein belongs to the eukaryotic ribosomal protein eS32 family. In terms of assembly, component of the large ribosomal subunit (LSU). Mature yeast ribosomes consist of a small (40S) and a large (60S) subunit. The 40S small subunit contains 1 molecule of ribosomal RNA (18S rRNA) and at least 33 different proteins. The large 60S subunit contains 3 rRNA molecules (25S, 5.8S and 5S rRNA) and at least 46 different proteins.

The protein resides in the cytoplasm. It localises to the nucleus. Its function is as follows. Component of the ribosome, a large ribonucleoprotein complex responsible for the synthesis of proteins in the cell. The small ribosomal subunit (SSU) binds messenger RNAs (mRNAs) and translates the encoded message by selecting cognate aminoacyl-transfer RNA (tRNA) molecules. The large subunit (LSU) contains the ribosomal catalytic site termed the peptidyl transferase center (PTC), which catalyzes the formation of peptide bonds, thereby polymerizing the amino acids delivered by tRNAs into a polypeptide chain. The nascent polypeptides leave the ribosome through a tunnel in the LSU and interact with protein factors that function in enzymatic processing, targeting, and the membrane insertion of nascent chains at the exit of the ribosomal tunnel. This chain is Small ribosomal subunit protein eS32A (rpl4101), found in Schizosaccharomyces pombe (strain 972 / ATCC 24843) (Fission yeast).